Consider the following 297-residue polypeptide: Mitochondrial substrate carrier family protein P (297 aa).

3 Solcar repeats span residues 12 to 98 (KPSW…IKNH), 104 to 189 (SSSF…LKRI), and 201 to 293 (ISGT…LSNF). 6 helical membrane-spanning segments follow: residues 15 to 35 (WVSFLSGGLAGVTAKSAVAPL), 66 to 86 (GIKGLWRGNSATILRVFPYAA), 107 to 127 (FQIFLAGSAAGGIAVCATYPL), 165 to 185 (IQPTLIGILPYGGISFSTFEF), 207 to 227 (LIAGGIAGGVAQTVAYPFDVV), and 262 to 282 (ILALYKGLSINYVKVIPTASI).

It belongs to the mitochondrial carrier (TC 2.A.29) family.

It localises to the mitochondrion inner membrane. Its function is as follows. Mitochondrial solute carriers shuttle metabolites, nucleotides, and cofactors through the mitochondrial inner membrane. Required for the accumulation of coenzyme A in the mitochondrial matrix. The polypeptide is Mitochondrial substrate carrier family protein P (mcfP) (Dictyostelium discoideum (Social amoeba)).